The chain runs to 153 residues: Ribosomal RNA large subunit methyltransferase H (153 aa).

S-adenosyl-L-methionine-binding residues include L71 and G102.

Belongs to the RNA methyltransferase RlmH family. Homodimer.

It is found in the cytoplasm. The catalysed reaction is pseudouridine(1915) in 23S rRNA + S-adenosyl-L-methionine = N(3)-methylpseudouridine(1915) in 23S rRNA + S-adenosyl-L-homocysteine + H(+). Its function is as follows. Specifically methylates the pseudouridine at position 1915 (m3Psi1915) in 23S rRNA. The sequence is that of Ribosomal RNA large subunit methyltransferase H from Anaeromyxobacter sp. (strain K).